The primary structure comprises 185 residues: MKQLLDFIPLILFFITYKLGGVREAAIVLVVATILQIVILKWKYGIVEKQQKIMASAVVFFGLLTAYFNEIRYLQWKVTIINGLFAIVLLVAQFQFKTPLIKKLLGKELQLPEKAWNTLNLGWALFFIICMLVNIYISHNMSEEAWVDFKSFGIIGMTVIATIISGVYIYRYLPKDGSNSKDGEK.

A run of 5 helical transmembrane segments spans residues 27-47, 53-73, 76-96, 118-138, and 149-169; these read IVLV…YGIV, IMAS…EIRY, WKVT…QFQF, TLNL…IYIS, and FKSF…GVYI.

Belongs to the YciB family.

The protein resides in the cell inner membrane. Plays a role in cell envelope biogenesis, maintenance of cell envelope integrity and membrane homeostasis. In Haemophilus influenzae (strain 86-028NP), this protein is Inner membrane-spanning protein YciB.